The following is a 137-amino-acid chain: Small ribosomal subunit protein uS12 (137 aa).

Residues 1–28 (MPTINQLVRKPRKSKAKKSDSPALNKGF) are disordered. Aspartate 102 is modified (3-methylthioaspartic acid).

Belongs to the universal ribosomal protein uS12 family. As to quaternary structure, part of the 30S ribosomal subunit. Contacts proteins S8 and S17. May interact with IF1 in the 30S initiation complex.

With S4 and S5 plays an important role in translational accuracy. Functionally, interacts with and stabilizes bases of the 16S rRNA that are involved in tRNA selection in the A site and with the mRNA backbone. Located at the interface of the 30S and 50S subunits, it traverses the body of the 30S subunit contacting proteins on the other side and probably holding the rRNA structure together. The combined cluster of proteins S8, S12 and S17 appears to hold together the shoulder and platform of the 30S subunit. The sequence is that of Small ribosomal subunit protein uS12 from Staphylococcus carnosus (strain TM300).